We begin with the raw amino-acid sequence, 707 residues long: DNA topoisomerase 1 (707 aa).

Residues 1 to 140 enclose the Toprim domain; it reads MYAILAEKPS…IKRLWTSSMT (140 aa). One can recognise a Topo IA-type catalytic domain in the interval 157–596; sequence TLPLYYQAKA…HSKKLSSVLF (440 aa). Residues 199–204 form an interaction with DNA region; that stretch reads SLGRVQ. The active-site O-(5'-phospho-DNA)-tyrosine intermediate is the tyrosine 323.

The protein belongs to the type IA topoisomerase family. Monomer.

It catalyses the reaction ATP-independent breakage of single-stranded DNA, followed by passage and rejoining.. Its function is as follows. Releases the supercoiling and torsional tension of DNA, which is introduced during the DNA replication and transcription, by transiently cleaving and rejoining one strand of the DNA duplex. Introduces a single-strand break via transesterification at a target site in duplex DNA. The scissile phosphodiester is attacked by the catalytic tyrosine of the enzyme, resulting in the formation of a DNA-(5'-phosphotyrosyl)-enzyme intermediate and the expulsion of a 3'-OH DNA strand. The free DNA strand then undergoes passage around the unbroken strand, thus removing DNA supercoils. Finally, in the religation step, the DNA 3'-OH attacks the covalent intermediate to expel the active-site tyrosine and restore the DNA phosphodiester backbone. The chain is DNA topoisomerase 1 (topA) from Alkalihalophilus pseudofirmus (strain ATCC BAA-2126 / JCM 17055 / OF4) (Bacillus pseudofirmus).